The chain runs to 365 residues: Eukaryotic translation initiation factor 3 subunit H (365 aa).

Residues 15 to 166 (ILLDSLVVMK…IRAWRLSTAA (152 aa)) form the MPN domain. The tract at residues 276 to 295 (KRQQENESRLARGDPPLPMD) is disordered. A compositionally biased stretch (basic and acidic residues) spans 277-287 (RQQENESRLAR).

It belongs to the eIF-3 subunit H family. As to quaternary structure, component of the eukaryotic translation initiation factor 3 (eIF-3) complex.

The protein resides in the cytoplasm. In terms of biological role, component of the eukaryotic translation initiation factor 3 (eIF-3) complex, which is involved in protein synthesis of a specialized repertoire of mRNAs and, together with other initiation factors, stimulates binding of mRNA and methionyl-tRNAi to the 40S ribosome. The eIF-3 complex specifically targets and initiates translation of a subset of mRNAs involved in cell proliferation. The polypeptide is Eukaryotic translation initiation factor 3 subunit H (Caenorhabditis briggsae).